The sequence spans 529 residues: NAD(P)H-quinone oxidoreductase chain 4 1 (529 aa).

13 helical membrane passes run 4–24 (FPWL…IPFI), 36–56 (WYAL…FTNF), 91–111 (LILL…PVTL), 115–135 (LFYF…AVQD), 137–157 (LVFF…LAIW), 169–189 (FILY…AMAF), 209–229 (GFQL…LPIV), 243–263 (TAPV…YALI), 277–297 (FAPV…LTSY), 314–334 (IGFV…GAVL), 335–355 (QMVS…ATYD), 387–407 (LALP…GFAT), and 417–437 (VIVV…LLSM).

This sequence belongs to the complex I subunit 4 family.

The protein localises to the cellular thylakoid membrane. It carries out the reaction a plastoquinone + NADH + (n+1) H(+)(in) = a plastoquinol + NAD(+) + n H(+)(out). It catalyses the reaction a plastoquinone + NADPH + (n+1) H(+)(in) = a plastoquinol + NADP(+) + n H(+)(out). Its function is as follows. NDH-1 shuttles electrons from NAD(P)H, via FMN and iron-sulfur (Fe-S) centers, to quinones in the respiratory chain. The immediate electron acceptor for the enzyme in this species is believed to be plastoquinone. Couples the redox reaction to proton translocation (for every two electrons transferred, four hydrogen ions are translocated across the cytoplasmic membrane), and thus conserves the redox energy in a proton gradient. This chain is NAD(P)H-quinone oxidoreductase chain 4 1, found in Thermosynechococcus vestitus (strain NIES-2133 / IAM M-273 / BP-1).